Here is a 252-residue protein sequence, read N- to C-terminus: Chitooligosaccharide deacetylase (252 aa).

The Mg(2+) site is built by H61 and H125.

The protein belongs to the YdjC deacetylase family. ChbG subfamily. As to quaternary structure, homodimer. Mg(2+) serves as cofactor.

It localises to the cytoplasm. The catalysed reaction is N,N'-diacetylchitobiose + H2O = N-acetyl-beta-D-glucosaminyl-(1-&gt;4)-D-glucosamine + acetate. The enzyme catalyses diacetylchitobiose-6'-phosphate + H2O = N'-monoacetylchitobiose-6'-phosphate + acetate. It functions in the pathway glycan degradation; chitin degradation. Involved in the degradation of chitin. ChbG is essential for growth on the acetylated chitooligosaccharides chitobiose and chitotriose but is dispensable for growth on cellobiose and chitosan dimer, the deacetylated form of chitobiose. Deacetylation of chitobiose-6-P and chitotriose-6-P is necessary for both the activation of the chb promoter by the regulatory protein ChbR and the hydrolysis of phosphorylated beta-glucosides by the phospho-beta-glucosidase ChbF. Catalyzes the removal of only one acetyl group from chitobiose-6-P to yield monoacetylchitobiose-6-P, the inducer of ChbR and the substrate of ChbF. In Shigella flexneri serotype 5b (strain 8401), this protein is Chitooligosaccharide deacetylase.